The primary structure comprises 149 residues: MGLEKSLMLFPLFVLLLGWVQPSLGRESSAQKFQRQHMDPAGSSSNSPTYCNQMMKRRDMTKGSCKPVNTFVHEPLADVQAICSQENVTCKNGKSNCYKSSSALHITDCHLKGNSKYPNCDYKTSQYQKQIIVACEGNPYVPVHFDATV.

Positions 1 to 25 (MGLEKSLMLFPLFVLLLGWVQPSLG) are cleaved as a signal peptide. Residues 30–49 (AQKFQRQHMDPAGSSSNSPT) are disordered. Substrate is bound by residues K32 and R35. H37 acts as the Proton acceptor in catalysis. 4 disulfide bridges follow: C51–C109, C65–C120, C83–C135, and C90–C97. 66–70 (KPVNT) provides a ligand contact to substrate. The N-linked (GlcNAc...) asparagine glycan is linked to N87. A substrate-binding site is contributed by K91. The Proton donor role is filled by H144.

It belongs to the pancreatic ribonuclease family. Monomer. Interacts with and forms tight 1:1 complexes with RNH1. Dimerization of two such complexes may occur. Interaction with RNH1 inhibits this protein. In terms of tissue distribution, pancreas.

It is found in the secreted. It catalyses the reaction an [RNA] containing cytidine + H2O = an [RNA]-3'-cytidine-3'-phosphate + a 5'-hydroxy-ribonucleotide-3'-[RNA].. It carries out the reaction an [RNA] containing uridine + H2O = an [RNA]-3'-uridine-3'-phosphate + a 5'-hydroxy-ribonucleotide-3'-[RNA].. Its function is as follows. Endonuclease that catalyzes the cleavage of RNA on the 3' side of pyrimidine nucleotides. Acts on single-stranded and double-stranded RNA. The sequence is that of Ribonuclease pancreatic (Rnase1) from Mus saxicola (Brown spiny mouse).